The primary structure comprises 412 residues: UV DNA damage endonuclease (412 aa).

It belongs to the uve1/UvsE family.

Functionally, component in a DNA repair pathway. Removal of UV LIGHT damaged nucleotides. Recognizes pyrimidine dimers and cleave a phosphodiester bond immediately 5' to the lesion. In Clostridium perfringens (strain 13 / Type A), this protein is UV DNA damage endonuclease.